We begin with the raw amino-acid sequence, 88 residues long: Large ribosomal subunit protein bL27 (88 aa).

This sequence belongs to the bacterial ribosomal protein bL27 family.

The sequence is that of Large ribosomal subunit protein bL27 from Mycolicibacterium smegmatis (strain ATCC 700084 / mc(2)155) (Mycobacterium smegmatis).